An 81-amino-acid polypeptide reads, in one-letter code: uncharacterized protein (81 aa).

Positions 1–22 (MNKKLSIIFLIFALIASVLCSA) are cleaved as a signal peptide. Residues 29 to 81 (HSSSTTTTTSSSGGTSGTDSSINTGSSYSGSGSGSGSTGGSGSGSGSGTAKWK) are disordered. Over residues 30–58 (SSSTTTTTSSSGGTSGTDSSINTGSSYSG) the composition is skewed to low complexity. The span at 59–75 (SGSGSGSTGGSGSGSGS) shows a compositional bias: gly residues.

The protein resides in the secreted. This is an uncharacterized protein from Dictyostelium discoideum (Social amoeba).